The primary structure comprises 275 residues: Undecaprenyl-diphosphatase (275 aa).

The next 8 helical transmembrane spans lie at 2–22 (LDIFKAIILGIIEGVTEFLPI), 43–63 (FINMFMVVIQLGAILSVIVIY), 83–103 (WQIWFKVIAAVLPSIIIGLPL), 111–131 (MTSWQVISATLIIYGILFIVL), 161–181 (VLSMIPGTSRSGATILGAMLI), 186–206 (YVATEFSFFLAIPTMFGASLL), 225–245 (ILLVGMVVSFIVAYLSIKFLL), and 255–275 (PFGWYRIVLGIIVTICGLVFA).

This sequence belongs to the UppP family.

It is found in the cell membrane. The catalysed reaction is di-trans,octa-cis-undecaprenyl diphosphate + H2O = di-trans,octa-cis-undecaprenyl phosphate + phosphate + H(+). Catalyzes the dephosphorylation of undecaprenyl diphosphate (UPP). Confers resistance to bacitracin. This Lactobacillus delbrueckii subsp. bulgaricus (strain ATCC 11842 / DSM 20081 / BCRC 10696 / JCM 1002 / NBRC 13953 / NCIMB 11778 / NCTC 12712 / WDCM 00102 / Lb 14) protein is Undecaprenyl-diphosphatase.